The sequence spans 690 residues: Elongation factor G (690 aa).

In terms of domain architecture, tr-type G spans 8–283 (EDYRNFGIMA…AVVDYLPSPL (276 aa)). GTP is bound by residues 17–24 (AHIDAGKT), 81–85 (DTPGH), and 135–138 (NKMD).

This sequence belongs to the TRAFAC class translation factor GTPase superfamily. Classic translation factor GTPase family. EF-G/EF-2 subfamily.

The protein localises to the cytoplasm. Its function is as follows. Catalyzes the GTP-dependent ribosomal translocation step during translation elongation. During this step, the ribosome changes from the pre-translocational (PRE) to the post-translocational (POST) state as the newly formed A-site-bound peptidyl-tRNA and P-site-bound deacylated tRNA move to the P and E sites, respectively. Catalyzes the coordinated movement of the two tRNA molecules, the mRNA and conformational changes in the ribosome. The sequence is that of Elongation factor G from Rhodopseudomonas palustris (strain ATCC BAA-98 / CGA009).